Here is a 1004-residue protein sequence, read N- to C-terminus: Protein CHUP1, chloroplastic (1004 aa).

The required for chloroplast localization stretch occupies residues 1 to 25; sequence MFVRIGFVVAASIAAVTVKRLNVKP. The disordered stretch occupies residues 22–63; that stretch reads NVKPSKPSKPSDNGEGGDKEQSVDPDYNLNDKNLQEEEEEEE. Positions 123–341 form a coiled coil; sequence EMAYNDGELE…KQVEGLQMNR (219 aa). The interval 269–290 is leucine-zipper 1; it reads LEVQVMELKRKNRELQHEKREL. Disordered regions lie at residues 398 to 482, 504 to 536, 612 to 718, and 736 to 755; these read GSER…SMNK, FGQV…GEGL, TATG…GNKV, and SKKE…SSAA. Serine 399 is modified (phosphoserine). Over residues 409–419 the composition is skewed to polar residues; that stretch reads ESNYSQPSSPG. Over residues 427–439 the composition is skewed to low complexity; that stretch reads SMDSSTSRFSSFS. Polar residues-rich tracts occupy residues 504 to 517 and 612 to 624; these read FGQV…TPET and TATG…SNES. The span at 670–706 shows a compositional bias: pro residues; sequence ARPPLPGGGPPPPPPPPGGGPPPPPGGGPPPPPPPPG. Positions 744 to 755 are enriched in polar residues; sequence LISSGTGNSSAA. A leucine-zipper 2 region spans residues 802 to 823; sequence LLAFVSWLDEELSFLVDERAVL. Residues 979 to 1004 form a disordered region; the sequence is RSRAKTESGDNNNNNNNNSNEEESVN.

Expressed in cauline leaves, rosette leaves, stems and flowers, but not in roots.

The protein localises to the plastid. The protein resides in the chloroplast outer membrane. Required for the positioning and movement of chloroplasts. Interacts with profilin and actin independent of its polymerization status. Regulates chloroplast localization by anchoring chloroplasts to the plasma membrane and forming a bridge to the actin cytoskeleton. The protein is Protein CHUP1, chloroplastic (CHUP1) of Arabidopsis thaliana (Mouse-ear cress).